The following is a 209-amino-acid chain: Uracil phosphoribosyltransferase (209 aa).

5-phospho-alpha-D-ribose 1-diphosphate-binding positions include Arg-79, Arg-104, and 131-139 (DPMLATGGS). Uracil is bound by residues Ile-194 and 199-201 (GDA). Asp-200 is a binding site for 5-phospho-alpha-D-ribose 1-diphosphate.

The protein belongs to the UPRTase family. Mg(2+) is required as a cofactor.

The catalysed reaction is UMP + diphosphate = 5-phospho-alpha-D-ribose 1-diphosphate + uracil. It participates in pyrimidine metabolism; UMP biosynthesis via salvage pathway; UMP from uracil: step 1/1. Allosterically activated by GTP. In terms of biological role, catalyzes the conversion of uracil and 5-phospho-alpha-D-ribose 1-diphosphate (PRPP) to UMP and diphosphate. The polypeptide is Uracil phosphoribosyltransferase (Halalkalibacterium halodurans (strain ATCC BAA-125 / DSM 18197 / FERM 7344 / JCM 9153 / C-125) (Bacillus halodurans)).